The following is a 114-amino-acid chain: Protein U68 (114 aa).

The protein belongs to the herpesviridae UL96 family.

This Homo sapiens (Human) protein is Protein U68 (U68).